The chain runs to 181 residues: Oligoribonuclease (181 aa).

In terms of domain architecture, Exonuclease spans 8–171; it reads LIWIDLEMTG…DDIRESVAEL (164 aa). Tyr129 is a catalytic residue.

It belongs to the oligoribonuclease family.

The protein localises to the cytoplasm. 3'-to-5' exoribonuclease specific for small oligoribonucleotides. This is Oligoribonuclease from Sodalis glossinidius (strain morsitans).